Reading from the N-terminus, the 903-residue chain is Probable dipeptidyl-aminopeptidase B (903 aa).

Residues 1-83 (MGKFEDDGNS…PLISSGTKTG (83 aa)) form a disordered region. At 1–90 (MGKFEDDGNS…KTGSSSRLRK (90 aa)) the chain is on the cytoplasmic side. Over residues 10–37 (SESVPLTRQRSESLASQTSTDSGLSIAS) the composition is skewed to polar residues. The chain crosses the membrane as a helical; Signal-anchor for type II membrane protein span at residues 91 to 111 (IVWLLVLLCVGGWVLSFVLFL). Topologically, residues 112-903 (TQKRPDTAAL…TANPKPQEST (792 aa)) are vacuolar. Residues 121 to 143 (LSSASTVEIHEPGPATGGTSHGK) form a disordered region. N-linked (GlcNAc...) asparagine glycans are attached at residues N268, N349, and N640. S754 functions as the Charge relay system in the catalytic mechanism. An N-linked (GlcNAc...) asparagine glycan is attached at N808. Catalysis depends on charge relay system residues D831 and H864.

Belongs to the peptidase S9B family.

The protein localises to the vacuole membrane. The catalysed reaction is Release of an N-terminal dipeptide, Xaa-Yaa-|-Zaa-, from a polypeptide, preferentially when Yaa is Pro, provided Zaa is neither Pro nor hydroxyproline.. Its function is as follows. Type IV dipeptidyl-peptidase which removes N-terminal dipeptides sequentially from polypeptides having unsubstituted N-termini provided that the penultimate residue is proline. This Penicillium rubens (strain ATCC 28089 / DSM 1075 / NRRL 1951 / Wisconsin 54-1255) (Penicillium chrysogenum) protein is Probable dipeptidyl-aminopeptidase B (dapB).